Here is a 164-residue protein sequence, read N- to C-terminus: Sec-independent protein translocase protein TatB (164 aa).

The chain crosses the membrane as a helical span at residues 1-21 (MIDIGLSKMALIGAVALIVIG). The disordered stretch occupies residues 81-102 (ASEFQKDWESGTSDAAATGHDG).

It belongs to the TatB family. The Tat system comprises two distinct complexes: a TatABC complex, containing multiple copies of TatA, TatB and TatC subunits, and a separate TatA complex, containing only TatA subunits. Substrates initially bind to the TatABC complex, which probably triggers association of the separate TatA complex to form the active translocon.

The protein localises to the cell inner membrane. In terms of biological role, part of the twin-arginine translocation (Tat) system that transports large folded proteins containing a characteristic twin-arginine motif in their signal peptide across membranes. Together with TatC, TatB is part of a receptor directly interacting with Tat signal peptides. TatB may form an oligomeric binding site that transiently accommodates folded Tat precursor proteins before their translocation. This Paracidovorax citrulli (strain AAC00-1) (Acidovorax citrulli) protein is Sec-independent protein translocase protein TatB.